The chain runs to 168 residues: Crossover junction endodeoxyribonuclease RuvC (168 aa).

Residues Asp-7, Glu-67, and His-139 contribute to the active site. The Mg(2+) site is built by Asp-7, Glu-67, and His-139.

The protein belongs to the RuvC family. Homodimer which binds Holliday junction (HJ) DNA. The HJ becomes 2-fold symmetrical on binding to RuvC with unstacked arms; it has a different conformation from HJ DNA in complex with RuvA. In the full resolvosome a probable DNA-RuvA(4)-RuvB(12)-RuvC(2) complex forms which resolves the HJ. Mg(2+) serves as cofactor.

The protein resides in the cytoplasm. It carries out the reaction Endonucleolytic cleavage at a junction such as a reciprocal single-stranded crossover between two homologous DNA duplexes (Holliday junction).. Its function is as follows. The RuvA-RuvB-RuvC complex processes Holliday junction (HJ) DNA during genetic recombination and DNA repair. Endonuclease that resolves HJ intermediates. Cleaves cruciform DNA by making single-stranded nicks across the HJ at symmetrical positions within the homologous arms, yielding a 5'-phosphate and a 3'-hydroxyl group; requires a central core of homology in the junction. The consensus cleavage sequence is 5'-(A/T)TT(C/G)-3'. Cleavage occurs on the 3'-side of the TT dinucleotide at the point of strand exchange. HJ branch migration catalyzed by RuvA-RuvB allows RuvC to scan DNA until it finds its consensus sequence, where it cleaves and resolves the cruciform DNA. The protein is Crossover junction endodeoxyribonuclease RuvC of Deinococcus geothermalis (strain DSM 11300 / CIP 105573 / AG-3a).